The sequence spans 462 residues: MERYDRQLRLWGALGQDSLNRSRVCVVGPATPLLQEVFKNLVLAGISSLTWLKVECAVQSGSLFLAELKKDLEPLASKQLEYEENDLRKTLQQPQYDWTRFSVVILTCIGEQTAMLDLNEIRRQRGTKFPPVLNTFVSGFYGYIYLVLSETHFVLQAHPDSKKYDLRLQNPWPELINYVDTFDLSKMDTATFSGIPYTVLLMKCIAKLERDGNNGRITIDQMKKVLDQICLPLGNDVIYEPNYVEAKRYAYLACSQNDCCKELEDLLRNLEISDYGNDWHDTYNYEILTLLLTLKNIAKENGELSFQPLTGTLPDMESTTENYIRLKKLYEVKAKLDKSRVEESLARSKKIVSQDVLETFCSHYGEVRKILPPKSDLLGIFSTSNALLDALVMVQFWEQPAVTAEDKDEFIGLRVDDNYSVMAFFGGAVVQEAIKLITHHYVPIDNLFLYNGINNSSATYKI.

This sequence belongs to the ubiquitin-activating E1 family. ULA1 subfamily. As to quaternary structure, heterodimer of UBA3 and ULA1. The complex binds NEDD8 and UBC12.

It functions in the pathway protein modification; protein neddylation. Regulatory subunit of the dimeric UBA3-ULA1 E1 enzyme. E1 activates NEDD8/RUB1 by first adenylating its C-terminal glycine residue with ATP, thereafter linking this residue to the side chain of the catalytic cysteine, yielding a NEDD8-UBA3 thioester and free AMP. E1 finally transfers NEDD8 to the catalytic cysteine of UBC12. In Saccharomyces cerevisiae (strain ATCC 204508 / S288c) (Baker's yeast), this protein is NEDD8-activating enzyme E1 regulatory subunit (ULA1).